The following is a 323-amino-acid chain: ATP synthase gamma chain (323 aa).

Belongs to the ATPase gamma chain family. As to quaternary structure, F-type ATPases have 2 components, CF(1) - the catalytic core - and CF(0) - the membrane proton channel. CF(1) has five subunits: alpha(3), beta(3), gamma(1), delta(1), epsilon(1). CF(0) has three main subunits: a, b and c.

It localises to the cell membrane. Produces ATP from ADP in the presence of a proton gradient across the membrane. The gamma chain is believed to be important in regulating ATPase activity and the flow of protons through the CF(0) complex. The protein is ATP synthase gamma chain of Nocardia farcinica (strain IFM 10152).